The chain runs to 46 residues: Mu-hexatoxin-Mg2a (46 aa).

5 cysteine pairs are disulfide-bonded: cysteine 3–cysteine 18, cysteine 10–cysteine 24, cysteine 17–cysteine 36, cysteine 21–cysteine 43, and cysteine 26–cysteine 34.

Belongs to the neurotoxin 02 (plectoxin) family. 02 (plectoxin) subfamily. Expressed by the venom gland.

It localises to the secreted. Functionally, competes for binding at site 3 of the insect voltage-gated sodium channel (Nav). Insecticidal neurotoxin. Causes temporary paralysis to lepidopteran larvae (10.3 nmol/g) or to crickets (doses from 0.93 to 119 ug/g). Is not toxic to mice when injected intracranially (high doses). This is Mu-hexatoxin-Mg2a from Macrothele gigas (Japanese funnel web spider).